We begin with the raw amino-acid sequence, 149 residues long: uncharacterized protein (149 aa).

The interval 1-103 (MFGLKVKNAE…SPTQGSRLRH (103 aa)) is disordered. The span at 7-18 (KNAEADTAKSNE) shows a compositional bias: basic and acidic residues. A compositionally biased stretch (low complexity) spans 26-41 (TGSSTTSGSGQSTQRG). The span at 61–72 (GSQGNSGDQGTE) shows a compositional bias: polar residues.

The protein belongs to the adhesin P1 family.

This is an uncharacterized protein from Mycoplasma pneumoniae (strain ATCC 29342 / M129 / Subtype 1) (Mycoplasmoides pneumoniae).